A 384-amino-acid chain; its full sequence is S-adenosylmethionine synthase (384 aa).

His-15 is an ATP binding site. Asp-17 lines the Mg(2+) pocket. Glu-43 contacts K(+). L-methionine is bound by residues Glu-56 and Gln-99. The tract at residues 99 to 109 (QSPDINQGVDR) is flexible loop. Residues 164–166 (DAK), 230–231 (RF), Asp-239, 245–246 (RK), Ala-262, and Lys-266 each bind ATP. Asp-239 contacts L-methionine. Lys-270 is a binding site for L-methionine.

The protein belongs to the AdoMet synthase family. As to quaternary structure, homotetramer; dimer of dimers. The cofactor is Mg(2+). K(+) is required as a cofactor.

The protein localises to the cytoplasm. It carries out the reaction L-methionine + ATP + H2O = S-adenosyl-L-methionine + phosphate + diphosphate. It participates in amino-acid biosynthesis; S-adenosyl-L-methionine biosynthesis; S-adenosyl-L-methionine from L-methionine: step 1/1. Catalyzes the formation of S-adenosylmethionine (AdoMet) from methionine and ATP. The overall synthetic reaction is composed of two sequential steps, AdoMet formation and the subsequent tripolyphosphate hydrolysis which occurs prior to release of AdoMet from the enzyme. The sequence is that of S-adenosylmethionine synthase from Salmonella heidelberg (strain SL476).